Here is a 118-residue protein sequence, read N- to C-terminus: Holo-[acyl-carrier-protein] synthase (118 aa).

Asp-8 and Glu-57 together coordinate Mg(2+).

This sequence belongs to the P-Pant transferase superfamily. AcpS family. Mg(2+) serves as cofactor.

It is found in the cytoplasm. The enzyme catalyses apo-[ACP] + CoA = holo-[ACP] + adenosine 3',5'-bisphosphate + H(+). Functionally, transfers the 4'-phosphopantetheine moiety from coenzyme A to a Ser of acyl-carrier-protein. The polypeptide is Holo-[acyl-carrier-protein] synthase (Acholeplasma laidlawii (strain PG-8A)).